Consider the following 581-residue polypeptide: uncharacterized protein (581 aa).

Belongs to the UbiD family.

This is an uncharacterized protein from Chlamydia caviae (strain ATCC VR-813 / DSM 19441 / 03DC25 / GPIC) (Chlamydophila caviae).